Consider the following 109-residue polypeptide: Cell division protein ZapA (109 aa).

Residues 21–99 (PEQQDALNQA…IEQALLEQGR (79 aa)) adopt a coiled-coil conformation.

It belongs to the ZapA family. Type 1 subfamily. In terms of assembly, homodimer. Interacts with FtsZ.

The protein resides in the cytoplasm. In terms of biological role, activator of cell division through the inhibition of FtsZ GTPase activity, therefore promoting FtsZ assembly into bundles of protofilaments necessary for the formation of the division Z ring. It is recruited early at mid-cell but it is not essential for cell division. This chain is Cell division protein ZapA, found in Pectobacterium carotovorum subsp. carotovorum (strain PC1).